Reading from the N-terminus, the 378-residue chain is CST complex subunit STN1 (378 aa).

The interaction with CTC1 stretch occupies residues 8 to 195; the sequence is MECESSPREE…KVYDQPFRNP (188 aa). The OB DNA-binding region spans 64–165; it reads VDIMGAVISV…EICANIYYKV (102 aa). Winged helix-turn-helix (wHTH) stretches follow at residues 201–305 and 306–378; these read EALN…YVTT and KDKD…YAAF.

It belongs to the STN1 family. Component of the CST complex, composed of TEN1/C17orf106, CTC1/C17orf68 and STN1; in the complex interacts directly with TEN1 and CTC1. Interacts with ACD/TPP1. Interacts with POT1 and POLA1.

The protein resides in the nucleus. The protein localises to the chromosome. It localises to the telomere. Its function is as follows. Component of the CST complex proposed to act as a specialized replication factor promoting DNA replication under conditions of replication stress or natural replication barriers such as the telomere duplex. The CST complex binds single-stranded DNA with high affinity in a sequence-independent manner, while isolated subunits bind DNA with low affinity by themselves. Initially the CST complex has been proposed to protect telomeres from DNA degradation. However, the CST complex has been shown to be involved in several aspects of telomere replication. The CST complex inhibits telomerase and is involved in telomere length homeostasis; it is proposed to bind to newly telomerase-synthesized 3' overhangs and to terminate telomerase action implicating the association with the ACD:POT1 complex thus interfering with its telomerase stimulation activity. The CST complex is also proposed to be involved in fill-in synthesis of the telomeric C-strand probably implicating recruitment and activation of DNA polymerase alpha. The CST complex facilitates recovery from many forms of exogenous DNA damage; seems to be involved in the re-initiation of DNA replication at repaired forks and/or dormant origins. Required for efficicient replication of the duplex region of the telomere. Promotes efficient replication of lagging-strand telomeres. Promotes general replication start following replication-fork stalling implicating new origin firing. May be in involved in C-strand fill-in during late S/G2 phase independent of its role in telomere duplex replication. This Mus musculus (Mouse) protein is CST complex subunit STN1.